A 344-amino-acid chain; its full sequence is Glycerol-3-phosphate dehydrogenase [NAD(P)+] (344 aa).

Positions 23, 24, 44, and 118 each coordinate NADPH. Sn-glycerol 3-phosphate-binding residues include Lys118, Gly147, and Thr149. Ala151 serves as a coordination point for NADPH. The sn-glycerol 3-phosphate site is built by Lys203, Asp256, Ser266, Arg267, and Asn268. Lys203 (proton acceptor) is an active-site residue. Arg267 is a binding site for NADPH. Val291 and Glu293 together coordinate NADPH.

It belongs to the NAD-dependent glycerol-3-phosphate dehydrogenase family.

The protein resides in the cytoplasm. It carries out the reaction sn-glycerol 3-phosphate + NAD(+) = dihydroxyacetone phosphate + NADH + H(+). It catalyses the reaction sn-glycerol 3-phosphate + NADP(+) = dihydroxyacetone phosphate + NADPH + H(+). The protein operates within membrane lipid metabolism; glycerophospholipid metabolism. Functionally, catalyzes the reduction of the glycolytic intermediate dihydroxyacetone phosphate (DHAP) to sn-glycerol 3-phosphate (G3P), the key precursor for phospholipid synthesis. The protein is Glycerol-3-phosphate dehydrogenase [NAD(P)+] of Vibrio cholerae serotype O1 (strain ATCC 39541 / Classical Ogawa 395 / O395).